An 899-amino-acid polypeptide reads, in one-letter code: Tuberous sclerosis 1 protein homolog (899 aa).

Coiled-coil stretches lie at residues 540–706 (LSST…CVNI) and 737–847 (SDEQ…ELKN). Residues 874–899 (NDSLHPKVGPPRRQSTDTSRSTFRQY) form a disordered region. Polar residues predominate over residues 889–899 (TDTSRSTFRQY).

In terms of assembly, interacts with tsc2.

Its subcellular location is the cytoplasm. In terms of biological role, together with tsc2, required for uptake of various amino acids from the environment and for proper conjugation. Involved in induction of gene expression of permeases and genes required for meiosis upon nitrogen starvation. May act as a GTPase-activating protein (GAP) for the small GTPase rhb1. The polypeptide is Tuberous sclerosis 1 protein homolog (tsc1) (Schizosaccharomyces pombe (strain 972 / ATCC 24843) (Fission yeast)).